The chain runs to 777 residues: Ethylene receptor 4 (777 aa).

Helical transmembrane passes span 49–69 (LLIAASFLSIPLELFYFATCA), 77–97 (AVLHFCAFIVLCGATHLLAAF), and 113–133 (AAKVLAAVASSAAAVSLLTFI). Residues C88 and H92 each contribute to the Cu cation site. Residues 184–344 (DAHAILRTTA…VVADQAAVAL (161 aa)) form the GAF domain. The Histidine kinase domain occupies 387-521 (AMCHAMRRPV…NTGSGACRLS (135 aa)). At H390 the chain carries Phosphohistidine; by autocatalysis. Positions 645–774 (RVLLADDDAM…ALGAQLCRVL (130 aa)) constitute a Response regulatory domain. Position 696 is a 4-aspartylphosphate (D696).

It belongs to the ethylene receptor family. Requires Cu cation as cofactor.

It is found in the endoplasmic reticulum membrane. The enzyme catalyses ATP + protein L-histidine = ADP + protein N-phospho-L-histidine.. Functionally, ethylene receptor related to bacterial two-component regulators. Acts as a redundant negative regulator of ethylene signaling. The sequence is that of Ethylene receptor 4 (ETR4) from Oryza sativa subsp. japonica (Rice).